The sequence spans 533 residues: MAKKRIAVIGAGASGLTCIKCCLEEGLEPVCFERSGDIGGLWRFQEAPEEGRASIYQSVVINTSKEMMCFSDYPIPDHYPNYMHNSQVLEYFRMYAKEFDLLKYIQFKTTVCSVKKQPDFSTSGQWQVVTECEGKQQVDVFDGVLVCTGHHTDAHLPLESFPGIEKFKGKYFHSRDYKNPVEFTGKRVIVIGIGNSGGDLAVEISHTAKQVFLSTRRGAWILNRVGKHGYPIDLLLSSRIMYYLSRICGPSLKNNYMEKQMNQRFDHEMFGLKPKHRALSQHPTVNDDLPNRIIAGLVKVKGNVKEFTETAAVFEDGSREDGIDVVIFATGYSFAFPFLEDSVKVVKNKVSLYKKVFPPNLEKPTLAIIGLIQPLGAIMPISELQGRWATQVFKGLKKLPSQSEMMAEINKAREEMAKRYVDSQRHTIQGDYIDTMEEIADLVGVRPNILPLVFTDPRLALRLLLGPCTPVQYRLQGPGKWAGARKTILTTEDRVRKPLMTRVVERDSSGGSLVTVRVLMLAVAFFAVILAYF.

Arg5 is subject to Dimethylated arginine. FAD contacts are provided by residues 10-14, Glu33, and 41-42; these read GAGAS and LW. Residue Ser54 is modified to Phosphoserine. Tyr56 is modified (phosphotyrosine). Ser58 carries the post-translational modification Phosphoserine. 62-63 lines the FAD pocket; that stretch reads NT. NADP(+) is bound at residue 196–199; that stretch reads SGGD. The residue at position 280 (Ser280) is a Phosphoserine. Thr284 carries the phosphothreonine modification. Position 401 is a phosphoserine (Ser401). A helical transmembrane segment spans residues 513–533; sequence LVTVRVLMLAVAFFAVILAYF.

Belongs to the FMO family. The cofactor is FAD. Expressed in liver (at protein level). Expressed in the mucosal epithelium of the gastrointestinal tract.

It localises to the microsome membrane. Its subcellular location is the endoplasmic reticulum membrane. The catalysed reaction is N,N-dimethylaniline + NADPH + O2 + H(+) = N,N-dimethylaniline N-oxide + NADP(+) + H2O. It carries out the reaction NADPH + O2 + H(+) = H2O2 + NADP(+). The enzyme catalyses heptan-2-one + NADPH + O2 + H(+) = pentyl acetate + NADP(+) + H2O. It catalyses the reaction octan-3-one + NADPH + O2 + H(+) = pentyl propanoate + NADP(+) + H2O. The catalysed reaction is octan-3-one + NADPH + O2 + H(+) = ethyl hexanoate + NADP(+) + H2O. It carries out the reaction hexan-3-one + NADPH + O2 + H(+) = ethyl butanoate + NADP(+) + H2O. The enzyme catalyses hexan-3-one + NADPH + O2 + H(+) = propyl propanoate + NADP(+) + H2O. It catalyses the reaction heptan-4-one + NADPH + O2 + H(+) = propyl butanoate + NADP(+) + H2O. The catalysed reaction is (2E)-geranial + NADPH + O2 + H(+) = (1E)-2,6-dimethylhepta-1,5-dien-1-yl formate + NADP(+) + H2O. It carries out the reaction sulcatone + NADPH + O2 + H(+) = 4-methylpent-3-en-1-yl acetate + NADP(+) + H2O. Acts as a Baeyer-Villiger monooxygenase on a broad range of substrates. Catalyzes the insertion of an oxygen atom into a carbon-carbon bond adjacent to a carbonyl, which converts ketones to esters. Active on diverse carbonyl compounds, whereas soft nucleophiles are mostly non- or poorly reactive. In contrast with other forms of FMO it is non- or poorly active on 'classical' substrates such as drugs, pesticides, and dietary components containing soft nucleophilic heteroatoms. Able to oxidize drug molecules bearing a carbonyl group on an aliphatic chain, such as nabumetone and pentoxifylline. Also, in the absence of substrates, shows slow but yet significant NADPH oxidase activity. Acts as a positive modulator of cholesterol biosynthesis as well as glucose homeostasis, promoting metabolic aging via pleiotropic effects. The chain is Flavin-containing monooxygenase 5 from Mus musculus (Mouse).